The sequence spans 340 residues: Tetraacyldisaccharide 4'-kinase (340 aa).

H51–T58 contributes to the ATP binding site.

Belongs to the LpxK family.

It catalyses the reaction a lipid A disaccharide + ATP = a lipid IVA + ADP + H(+). The protein operates within glycolipid biosynthesis; lipid IV(A) biosynthesis; lipid IV(A) from (3R)-3-hydroxytetradecanoyl-[acyl-carrier-protein] and UDP-N-acetyl-alpha-D-glucosamine: step 6/6. Its function is as follows. Transfers the gamma-phosphate of ATP to the 4'-position of a tetraacyldisaccharide 1-phosphate intermediate (termed DS-1-P) to form tetraacyldisaccharide 1,4'-bis-phosphate (lipid IVA). This is Tetraacyldisaccharide 4'-kinase from Rhodopseudomonas palustris (strain TIE-1).